Consider the following 155-residue polypeptide: Cyanate hydratase (155 aa).

Residues Arg-95, Glu-98, and Ser-121 contribute to the active site.

It belongs to the cyanase family.

It catalyses the reaction cyanate + hydrogencarbonate + 3 H(+) = NH4(+) + 2 CO2. Catalyzes the reaction of cyanate with bicarbonate to produce ammonia and carbon dioxide. This Pseudomonas savastanoi pv. phaseolicola (strain 1448A / Race 6) (Pseudomonas syringae pv. phaseolicola (strain 1448A / Race 6)) protein is Cyanate hydratase.